The following is a 100-amino-acid chain: Signal recognition particle 19 kDa protein (100 aa).

Belongs to the SRP19 family. As to quaternary structure, part of the signal recognition particle protein translocation system, which is composed of SRP and FtsY. Archaeal SRP consists of a 7S RNA molecule of 300 nucleotides and two protein subunits: SRP54 and SRP19.

Its subcellular location is the cytoplasm. Involved in targeting and insertion of nascent membrane proteins into the cytoplasmic membrane. Binds directly to 7S RNA and mediates binding of the 54 kDa subunit of the SRP. In Pyrococcus furiosus (strain ATCC 43587 / DSM 3638 / JCM 8422 / Vc1), this protein is Signal recognition particle 19 kDa protein.